Here is a 579-residue protein sequence, read N- to C-terminus: CTP synthase 1 (579 aa).

Residues 305–559 (KIALVGKYTN…LGLVAASAGI (255 aa)) enclose the Glutamine amidotransferase type-1 domain. The For GATase activity role is filled by cysteine 404. Lysine 422 is covalently cross-linked (Glycyl lysine isopeptide (Lys-Gly) (interchain with G-Cter in ubiquitin)). Residues histidine 535 and glutamate 537 each act as for GATase activity in the active site.

Belongs to the CTP synthase family. In terms of assembly, homodimer. Oligomerizes to a tetramer in the presence of its substrates UTP and ATP.

It carries out the reaction UTP + L-glutamine + ATP + H2O = CTP + L-glutamate + ADP + phosphate + 2 H(+). The protein operates within pyrimidine metabolism; CTP biosynthesis via de novo pathway; CTP from UDP: step 2/2. Activated by GTP and inhibited by CTP. Functionally, catalyzes the ATP-dependent amination of UTP to CTP with either L-glutamine or ammonia as the source of nitrogen. This chain is CTP synthase 1 (URA7), found in Saccharomyces cerevisiae (strain ATCC 204508 / S288c) (Baker's yeast).